The chain runs to 175 residues: MGKLLSKIFGNKEMRILMLGLDAAGKTTILYKLKLGQSVTTIPTVGFNVETVTYKNVKFNVWDVGGQDKIRPLWRHYYTGTQGLIFVVDCADRDRIDEARTELHRIINDREMRDAIILIFANKQDLPDAMKPHEIQEKLGLTRIRDRNWYVQPSCATSGDGLSEGLIWLTSNHKL.

Gly-2 carries N-myristoyl glycine lipidation. GTP-binding positions include 20 to 27 (GLDAAGKT), 63 to 67 (DVGGQ), and 122 to 125 (NKQD).

The protein belongs to the small GTPase superfamily. Arf family. Expressed in the head (at protein level).

It localises to the golgi apparatus. With respect to regulation, activation is generally mediated by a guanine exchange factor (GEF), while inactivation through hydrolysis of bound GTP is catalyzed by a GTPase activating protein (GAP). May be activated by Efa6. Its function is as follows. GTP-binding protein involved in protein trafficking; may modulate vesicle budding and uncoating within the Golgi apparatus. Promotes cell movement and remodeling of the actin cytoskeleton during compound eye morphogenesis. Required for normal ethanol-induced tolerance and preference. Probably after Efa6-mediated activation, counteracts ethanol-induced sedation. This chain is ADP-ribosylation factor 6, found in Drosophila melanogaster (Fruit fly).